The following is a 959-amino-acid chain: Autophagy-related protein 18g (959 aa).

WD repeat units lie at residues 376–416 and 438–479; these read AHTS…SHNA and ITSA…AAFQ. Positions 802 to 832 are disordered; sequence GSIESAESSEEGSTKQMENLHDSDHMSNSIK.

This sequence belongs to the WD repeat PROPPIN family. As to quaternary structure, component of the PI(3,5)P2 regulatory complex at least composed of ATG18, SAC/FIG4, FAB1 and VAC14. Expressed in leaves.

It is found in the preautophagosomal structure membrane. It localises to the vacuole membrane. In terms of biological role, the PI(3,5)P2 regulatory complex regulates both the synthesis and turnover of phosphatidylinositol 3,5-bisphosphate (PtdIns(3,5)P2). Required for autophagy. In Arabidopsis thaliana (Mouse-ear cress), this protein is Autophagy-related protein 18g (ATG18G).